The following is a 72-amino-acid chain: Sec-independent protein translocase protein TatA (72 aa).

Residues 1–21 traverse the membrane as a helical segment; the sequence is MLGGISIWQLLIVLAILVLIF.

The protein belongs to the TatA/E family. As to quaternary structure, the Tat system comprises two distinct complexes: a TatABC complex, containing multiple copies of TatA, TatB and TatC subunits, and a separate TatA complex, containing only TatA subunits. Substrates initially bind to the TatABC complex, which probably triggers association of the separate TatA complex to form the active translocon.

It is found in the cell inner membrane. Part of the twin-arginine translocation (Tat) system that transports large folded proteins containing a characteristic twin-arginine motif in their signal peptide across membranes. TatA could form the protein-conducting channel of the Tat system. In Marinomonas sp. (strain MWYL1), this protein is Sec-independent protein translocase protein TatA.